A 95-amino-acid polypeptide reads, in one-letter code: Large ribosomal subunit protein bL27 (95 aa).

A propeptide spanning residues 1 to 10 (MRFILNLQFF) is cleaved from the precursor.

Belongs to the bacterial ribosomal protein bL27 family. In terms of processing, the N-terminus is cleaved by ribosomal processing cysteine protease Prp.

This is Large ribosomal subunit protein bL27 from Mesoplasma florum (strain ATCC 33453 / NBRC 100688 / NCTC 11704 / L1) (Acholeplasma florum).